The primary structure comprises 101 residues: Cyanovirin-N (101 aa).

2 disulfides stabilise this stretch: Cys-8–Cys-22 and Cys-58–Cys-73.

Belongs to the cyanovirin-N family. As to quaternary structure, in solution exists as a metastable domain-swapped homodimer which very slowly converts into a more stable monomeric form at room temperature. Under physiological conditions it is unlikely that the dimeric species exists and indeed the monomer is more active against HIV. Interacts with HIV-1 gp120. In terms of processing, cleavage, or reduction and alkylation of the disulfide bonds results in the loss of anti-HIV activity.

Its function is as follows. Mannose-binding lectin. This chain is Cyanovirin-N, found in Nostoc ellipsosporum.